The primary structure comprises 200 residues: Eukaryotic translation initiation factor isoform 4E (200 aa).

The disordered stretch occupies residues 1-22 (MATEAPIEATEVPPASATETVA). MRNA contacts are provided by residues 44–49 (QGAAWG), lysine 76, and 94–95 (WE). Cysteine 99 and cysteine 138 are oxidised to a cystine. Residues 145–150 (RRSQDK) and 189–192 (KRER) contribute to the mRNA site.

The protein belongs to the eukaryotic initiation factor 4E family. EIF4F is a multi-subunit complex, the composition of which varies with external and internal environmental conditions. It is composed of at least EIF4A, EIF4E and EIF4G. EIF4E is also known to interact with other partners. In higher plants two isoforms of EIF4F have been identified, named isoform EIF4F and isoform EIF(iso)4F. Isoform EIF4F has subunits p220 and p26, whereas isoform EIF(iso)4F has subunits p82 and p28. In terms of assembly, (Microbial infection) Interacts with viral genome-linked protein (VPg); this interaction is possible in susceptible hosts but impaired in resistant plants. Post-translationally, according to the redox status, the Cys-99-Cys-138 disulfide bridge may have a role in regulating protein function by affecting its ability to bind capped mRNA. In terms of tissue distribution, expressed ubiquitously in seedlings, roots, leaves, sepals, petals, anthers and dehisced pollen, with highest levels in pollen, maturing anthers and roots. Strongly expressed in susceptible plants but not in resistant ones.

Its subcellular location is the cytoplasm. The protein resides in the nucleus. Its function is as follows. Component of the protein complex eIF4F, which is involved in the recognition of the mRNA cap, ATP-dependent unwinding of 5'-terminal secondary structure and recruitment of mRNA to the ribosome. Recognizes and binds the 7-methylguanosine-containing mRNA cap during an early step in the initiation of protein synthesis and facilitates ribosome binding by inducing the unwinding of the mRNAs secondary structures. Key component of recessive resistance to potyviruses. Functionally, (Microbial infection) Susceptibility host factor required for viral infection (e.g. potato virus Y (PVY) and pepper mottle virus (PepMoV)) by recruiting viral RNAs to the host ribosomal complex via an interaction with viral genome-linked protein (VPg). This chain is Eukaryotic translation initiation factor isoform 4E, found in Nicotiana tabacum (Common tobacco).